Here is a 528-residue protein sequence, read N- to C-terminus: Phosphoenolpyruvate carboxykinase (ATP) (528 aa).

Residues arginine 56, tyrosine 192, and lysine 198 each coordinate substrate. ATP is bound by residues lysine 198, histidine 217, and 233-241; that span reads GLSGTGKTT. 2 residues coordinate Mn(2+): lysine 198 and histidine 217. Aspartate 254 lines the Mn(2+) pocket. Residues glutamate 282, arginine 319, and threonine 444 each contribute to the ATP site. Residue arginine 319 participates in substrate binding.

It belongs to the phosphoenolpyruvate carboxykinase (ATP) family. It depends on Mn(2+) as a cofactor.

The protein resides in the cytoplasm. The catalysed reaction is oxaloacetate + ATP = phosphoenolpyruvate + ADP + CO2. Its pathway is carbohydrate biosynthesis; gluconeogenesis. Its function is as follows. Involved in the gluconeogenesis. Catalyzes the conversion of oxaloacetate (OAA) to phosphoenolpyruvate (PEP) through direct phosphoryl transfer between the nucleoside triphosphate and OAA. The protein is Phosphoenolpyruvate carboxykinase (ATP) of Bacillus cereus (strain 03BB102).